A 303-amino-acid polypeptide reads, in one-letter code: Acetylglutamate kinase (303 aa).

Substrate-binding positions include G76–G77, R98, and N192.

Belongs to the acetylglutamate kinase family. ArgB subfamily.

Its subcellular location is the cytoplasm. The catalysed reaction is N-acetyl-L-glutamate + ATP = N-acetyl-L-glutamyl 5-phosphate + ADP. It participates in amino-acid biosynthesis; L-arginine biosynthesis; N(2)-acetyl-L-ornithine from L-glutamate: step 2/4. Its function is as follows. Catalyzes the ATP-dependent phosphorylation of N-acetyl-L-glutamate. The sequence is that of Acetylglutamate kinase from Chlorobium phaeobacteroides (strain DSM 266 / SMG 266 / 2430).